The chain runs to 168 residues: Small ribosomal subunit protein uS5 (168 aa).

Residues 13–76 (LQEKLIAVNR…EKARRNMVTV (64 aa)) enclose the S5 DRBM domain.

Belongs to the universal ribosomal protein uS5 family. In terms of assembly, part of the 30S ribosomal subunit. Contacts proteins S4 and S8.

In terms of biological role, with S4 and S12 plays an important role in translational accuracy. Its function is as follows. Located at the back of the 30S subunit body where it stabilizes the conformation of the head with respect to the body. In Shewanella amazonensis (strain ATCC BAA-1098 / SB2B), this protein is Small ribosomal subunit protein uS5.